The sequence spans 532 residues: Glucan synthesis regulatory protein (532 aa).

The interval 374 to 532 (TANKRKSMAP…DAEDMKDIEI (159 aa)) is disordered. The segment covering 381–393 (MAPSMASASGMRS) has biased composition (low complexity). Over residues 447–457 (PTTSLTASNAS) the composition is skewed to polar residues. The span at 475–516 (SGEHSKEDIKVNEDSPAKERTSEDKEKKPETEANGKATESKG) shows a compositional bias: basic and acidic residues.

This sequence belongs to the KNR4/SMI1 family.

Involved in the regulation of 1,3-beta-glucan synthase activity and cell-wall formation. This is Glucan synthesis regulatory protein (cot-2) from Neurospora crassa (strain ATCC 24698 / 74-OR23-1A / CBS 708.71 / DSM 1257 / FGSC 987).